We begin with the raw amino-acid sequence, 179 residues long: Cytochrome b6-f complex iron-sulfur subunit (179 aa).

Residues 21-43 (LLTFGTVTGVALGALYPVVNYFI) traverse the membrane as a helical segment. In terms of domain architecture, Rieske spans 61–162 (GNDVSVTKFL…TNVSDDKIVL (102 aa)). Residues C108, H110, C126, and H129 each coordinate [2Fe-2S] cluster. C113 and C128 are oxidised to a cystine.

Belongs to the Rieske iron-sulfur protein family. In terms of assembly, the 4 large subunits of the cytochrome b6-f complex are cytochrome b6, subunit IV (17 kDa polypeptide, PetD), cytochrome f and the Rieske protein, while the 4 small subunits are PetG, PetL, PetM and PetN. The complex functions as a dimer. [2Fe-2S] cluster is required as a cofactor.

It localises to the cellular thylakoid membrane. It carries out the reaction 2 oxidized [plastocyanin] + a plastoquinol + 2 H(+)(in) = 2 reduced [plastocyanin] + a plastoquinone + 4 H(+)(out). Functionally, component of the cytochrome b6-f complex, which mediates electron transfer between photosystem II (PSII) and photosystem I (PSI), cyclic electron flow around PSI, and state transitions. The polypeptide is Cytochrome b6-f complex iron-sulfur subunit (Nostoc punctiforme (strain ATCC 29133 / PCC 73102)).